The chain runs to 633 residues: Protein BZZ1 (633 aa).

An F-BAR domain is found at 5-271 (LSIGNEIKDS…VVKQNKPSLN (267 aa)). Positions 138-210 (DMVNKKDNIY…INQANRTKDK (73 aa)) form a coiled coil. Residues S327, S463, S472, and S476 each carry the phosphoserine modification. The segment at 429 to 495 (VDSKPSSGGS…KKTTQNSSDD (67 aa)) is disordered. Residues 474-493 (NNSIRTTSTNNTKKTTQNSS) show a composition bias toward low complexity. 2 consecutive SH3 domains span residues 493 to 555 (SDDG…ISSA) and 577 to 633 (LPVR…SYCK).

The protein belongs to the BZZ1 family. As to quaternary structure, interacts with LAS17 and MYO5.

It is found in the cytoplasm. It localises to the cytoskeleton. The protein localises to the actin patch. In terms of biological role, plays a role in endocytosis and trafficking to the vacuole. Functions with type I myosins to restore polarity of the actin cytoskeleton after NaCl stress. The protein is Protein BZZ1 (BZZ1) of Saccharomyces cerevisiae (strain ATCC 204508 / S288c) (Baker's yeast).